The primary structure comprises 449 residues: Exopolygalacturonase X-2 (449 aa).

A signal peptide spans 1 to 24 (MGFKRTIGLLLGILLALDQVSVLA). Asn-136, Asn-172, and Asn-208 each carry an N-linked (GlcNAc...) asparagine glycan. The PbH1 1 repeat unit spans residues 240-261 (SDNVVIQNSVINHDDDCVSFKP). The Proton donor role is filled by Asp-254. A disulfide bridge connects residues Cys-256 and Cys-273. Asn-262 and Asn-274 each carry an N-linked (GlcNAc...) asparagine glycan. PbH1 repeat units follow at residues 263 to 283 (STNI…SVGS) and 294 to 315 (VSDL…RLKV). The active site involves His-277. Asn-301, Asn-306, Asn-340, and Asn-365 each carry an N-linked (GlcNAc...) asparagine glycan. Cys-403 and Cys-409 form a disulfide bridge. N-linked (GlcNAc...) asparagine glycans are attached at residues Asn-416 and Asn-421.

Belongs to the glycosyl hydrolase 28 family.

The protein localises to the secreted. It catalyses the reaction [(1-&gt;4)-alpha-D-galacturonosyl](n) + H2O = alpha-D-galacturonate + [(1-&gt;4)-alpha-D-galacturonosyl](n-1). Its function is as follows. Specific in hydrolyzing the terminal glycosidic bond of polygalacturonic acid and oligogalacturonates. The sequence is that of Exopolygalacturonase X-2 (pgaX-2) from Emericella nidulans (strain FGSC A4 / ATCC 38163 / CBS 112.46 / NRRL 194 / M139) (Aspergillus nidulans).